The primary structure comprises 241 residues: MRILLLEGITDVAFFIPILKKLYGFSEISCDGIIRAEKMGDISKPICLENEDVKLIVFHSGGKSKQKHALTAMLTAIKMGYLSNIKILGIARDIDQEHDVKNWTKSIIKNAGFEVKEGDKFLIIEDLNLKIAVLGIANYDEDDFNIPSFELKRELEAVITDMAKEISIIEKFKNSLESLSNDAERRLKPKDITHVLAIAKNFDGDSMSGLYRKFIEEQINNKNKVNFLLTLICILPCLTIF.

This is an uncharacterized protein from Methanocaldococcus jannaschii (strain ATCC 43067 / DSM 2661 / JAL-1 / JCM 10045 / NBRC 100440) (Methanococcus jannaschii).